We begin with the raw amino-acid sequence, 317 residues long: Sulfate adenylyltransferase subunit 2 (317 aa).

Basic and acidic residues predominate over residues 1 to 10 (MSNAVHETDS). Disordered stretches follow at residues 1–21 (MSNAVHETDSKNTVASKPPLD) and 298–317 (RAIDRDQSGSMEKKKREGYF).

The protein belongs to the PAPS reductase family. CysD subfamily. Heterodimer composed of CysD, the smaller subunit, and CysN.

The enzyme catalyses sulfate + ATP + H(+) = adenosine 5'-phosphosulfate + diphosphate. The protein operates within sulfur metabolism; hydrogen sulfide biosynthesis; sulfite from sulfate: step 1/3. With CysN forms the ATP sulfurylase (ATPS) that catalyzes the adenylation of sulfate producing adenosine 5'-phosphosulfate (APS) and diphosphate, the first enzymatic step in sulfur assimilation pathway. APS synthesis involves the formation of a high-energy phosphoric-sulfuric acid anhydride bond driven by GTP hydrolysis by CysN coupled to ATP hydrolysis by CysD. This chain is Sulfate adenylyltransferase subunit 2, found in Agrobacterium fabrum (strain C58 / ATCC 33970) (Agrobacterium tumefaciens (strain C58)).